Consider the following 484-residue polypeptide: Catalase (484 aa).

The residue at position 53 (M53) is a Methionine sulfone. Catalysis depends on residues H54 and N127. Y337 is a binding site for heme.

Homotetramer. Heme is required as a cofactor. Requires NADP(+) as cofactor.

It localises to the cytoplasm. It catalyses the reaction 2 H2O2 = O2 + 2 H2O. Its function is as follows. Decomposes hydrogen peroxide into water and oxygen; serves to protect cells from the toxic effects of hydrogen peroxide. The polypeptide is Catalase (katA) (Proteus mirabilis).